The sequence spans 214 residues: Soluble inorganic pyrophosphatase (214 aa).

The substrate site is built by lysine 64, arginine 78, and tyrosine 90. Residues aspartate 100, aspartate 105, and aspartate 137 each coordinate Mg(2+). Position 174 (tyrosine 174) interacts with substrate.

This sequence belongs to the PPase family. It depends on Mg(2+) as a cofactor.

It is found in the cytoplasm. It catalyses the reaction diphosphate + H2O = 2 phosphate + H(+). The polypeptide is Soluble inorganic pyrophosphatase (IPP) (Oryza sativa subsp. indica (Rice)).